The following is a 490-amino-acid chain: Betaine aldehyde dehydrogenase (490 aa).

D93 provides a ligand contact to K(+). 150 to 152 (GAW) lines the NAD(+) pocket. Residue K162 is the Charge relay system of the active site. Residue 176-179 (KPSE) coordinates NAD(+). Residue V180 coordinates K(+). 230-233 (GIAS) provides a ligand contact to NAD(+). L246 is a K(+) binding site. Residue E252 is the Proton acceptor of the active site. NAD(+) contacts are provided by G254, C286, and E387. C286 acts as the Nucleophile in catalysis. Residue C286 is modified to Cysteine sulfenic acid (-SOH). K457 and G460 together coordinate K(+). E464 functions as the Charge relay system in the catalytic mechanism.

Belongs to the aldehyde dehydrogenase family. As to quaternary structure, dimer of dimers. K(+) serves as cofactor.

The catalysed reaction is betaine aldehyde + NAD(+) + H2O = glycine betaine + NADH + 2 H(+). The protein operates within amine and polyamine biosynthesis; betaine biosynthesis via choline pathway; betaine from betaine aldehyde: step 1/1. Functionally, involved in the biosynthesis of the osmoprotectant glycine betaine. Catalyzes the irreversible oxidation of betaine aldehyde to the corresponding acid. The protein is Betaine aldehyde dehydrogenase of Pectobacterium atrosepticum (strain SCRI 1043 / ATCC BAA-672) (Erwinia carotovora subsp. atroseptica).